Here is a 1140-residue protein sequence, read N- to C-terminus: Eukaryotic translation initiation factor 3 subunit A (1140 aa).

Residues 319 to 501 form the PCI domain; sequence LQRMAAHVLL…NSIYFGTDLT (183 aa). Composition is skewed to basic and acidic residues over residues 588 to 623 and 829 to 899; these read QNNA…EERE and AAEE…RGGD. Disordered stretches follow at residues 588-630 and 829-1140; these read QNNA…HQNE and AAEE…VKRR. Ser-908 is modified (phosphoserine). 4 stretches are compositionally biased toward basic and acidic residues: residues 920-976, 990-1051, 1059-1086, and 1109-1130; these read ERND…EPDS, SRDD…EPQR, DAPR…RGDQ, and TREE…KAGD.

The protein belongs to the eIF-3 subunit A family. In terms of assembly, component of the eukaryotic translation initiation factor 3 (eIF-3) complex. The eIF-3 complex interacts with pix.

The protein resides in the cytoplasm. In terms of biological role, RNA-binding component of the eukaryotic translation initiation factor 3 (eIF-3) complex, which is involved in protein synthesis of a specialized repertoire of mRNAs and, together with other initiation factors, stimulates binding of mRNA and methionyl-tRNAi to the 40S ribosome. The eIF-3 complex specifically targets and initiates translation of a subset of mRNAs involved in cell proliferation. The protein is Eukaryotic translation initiation factor 3 subunit A of Drosophila melanogaster (Fruit fly).